Reading from the N-terminus, the 155-residue chain is MRLTIVAVGQKVPDWAQTAYDDYAKRFPPELKVELKAVKTEPRGSKTLENLLAAERTRIEGAIARGCRIVALDERGTAVTTMALAEHLKNWQLSGDDVAIVIGGPDGLDAGFKQSAHQRIRLSDLTLPHAMVRVLLIEQLYRAWSITINHPYHRE.

S-adenosyl-L-methionine is bound by residues Leu72, Gly103, and 122 to 127; that span reads LSDLTL.

The protein belongs to the RNA methyltransferase RlmH family. As to quaternary structure, homodimer.

Its subcellular location is the cytoplasm. It carries out the reaction pseudouridine(1915) in 23S rRNA + S-adenosyl-L-methionine = N(3)-methylpseudouridine(1915) in 23S rRNA + S-adenosyl-L-homocysteine + H(+). Its function is as follows. Specifically methylates the pseudouridine at position 1915 (m3Psi1915) in 23S rRNA. The chain is Ribosomal RNA large subunit methyltransferase H from Polaromonas naphthalenivorans (strain CJ2).